A 462-amino-acid polypeptide reads, in one-letter code: Argininosuccinate lyase (462 aa).

The protein belongs to the lyase 1 family. Argininosuccinate lyase subfamily.

It localises to the cytoplasm. The enzyme catalyses 2-(N(omega)-L-arginino)succinate = fumarate + L-arginine. The protein operates within amino-acid biosynthesis; L-arginine biosynthesis; L-arginine from L-ornithine and carbamoyl phosphate: step 3/3. The polypeptide is Argininosuccinate lyase (Bacillus mycoides (strain KBAB4) (Bacillus weihenstephanensis)).